Here is a 483-residue protein sequence, read N- to C-terminus: Glycogen synthase (483 aa).

K18 serves as a coordination point for ADP-alpha-D-glucose.

The protein belongs to the glycosyltransferase 1 family. Bacterial/plant glycogen synthase subfamily.

The enzyme catalyses [(1-&gt;4)-alpha-D-glucosyl](n) + ADP-alpha-D-glucose = [(1-&gt;4)-alpha-D-glucosyl](n+1) + ADP + H(+). Its pathway is glycan biosynthesis; glycogen biosynthesis. Synthesizes alpha-1,4-glucan chains using ADP-glucose. This Rhodopseudomonas palustris (strain ATCC BAA-98 / CGA009) protein is Glycogen synthase.